The chain runs to 36 residues: Toxin Iob1 (36 aa).

3 cysteine pairs are disulfide-bonded: Cys6-Cys21, Cys13-Cys26, and Cys20-Cys33.

Its subcellular location is the secreted. Functionally, binds reversibly and blocks N-type voltage-gated calcium channels (Cav). The polypeptide is Toxin Iob1 (Isyndus obscurus (Assassin bug)).